Reading from the N-terminus, the 84-residue chain is RNA-binding protein Hfq (84 aa).

Residues Asp11 to Ile71 form the Sm domain.

It belongs to the Hfq family. As to quaternary structure, homohexamer.

Its function is as follows. RNA chaperone that binds small regulatory RNA (sRNAs) and mRNAs to facilitate mRNA translational regulation in response to envelope stress, environmental stress and changes in metabolite concentrations. Also binds with high specificity to tRNAs. This chain is RNA-binding protein Hfq, found in Beijerinckia indica subsp. indica (strain ATCC 9039 / DSM 1715 / NCIMB 8712).